Here is a 172-residue protein sequence, read N- to C-terminus: Adenylate kinase isoenzyme 6 (172 aa).

Positions 13, 15, 16, 17, and 18 each coordinate ATP. Residues 33–56 (NVGDLAREGQLYDGYDEEYDCPIL) are NMPbind. The segment at 108–118 (NRGYNEKKLKD) is LID. ATP-binding residues include Arg109 and Lys148.

Belongs to the adenylate kinase family. AK6 subfamily. Monomer and homodimer. Interacts with small ribosomal subunit protein uS11. Not a structural component of 43S pre-ribosomes, but transiently interacts with them by binding to uS11. Interacts with COIL (via C-terminus).

It is found in the cytoplasm. Its subcellular location is the nucleus. The protein resides in the nucleoplasm. It localises to the cajal body. The enzyme catalyses AMP + ATP = 2 ADP. It catalyses the reaction ATP + H2O = ADP + phosphate + H(+). Broad-specificity nucleoside monophosphate (NMP) kinase that catalyzes the reversible transfer of the terminal phosphate group between nucleoside triphosphates and monophosphates. Also has ATPase activity. Involved in the late cytoplasmic maturation steps of the 40S ribosomal particles, specifically 18S rRNA maturation. While NMP activity is not required for ribosome maturation, ATPase activity is. Associates transiently with small ribosomal subunit protein uS11. ATP hydrolysis breaks the interaction with uS11. May temporarily remove uS11 from the ribosome to enable a conformational change of the ribosomal RNA that is needed for the final maturation step of the small ribosomal subunit. Its NMP activity may have a role in nuclear energy homeostasis. May be involved in regulation of Cajal body (CB) formation. In Bos taurus (Bovine), this protein is Adenylate kinase isoenzyme 6.